The primary structure comprises 347 residues: Ribosomal RNA large subunit methyltransferase M (347 aa).

S-adenosyl-L-methionine is bound by residues Ser184, 217–220 (APGG), Asp236, Asp256, and Asp272. Catalysis depends on Lys301, which acts as the Proton acceptor.

The protein belongs to the class I-like SAM-binding methyltransferase superfamily. RNA methyltransferase RlmE family. RlmM subfamily. In terms of assembly, monomer.

The protein resides in the cytoplasm. It carries out the reaction cytidine(2498) in 23S rRNA + S-adenosyl-L-methionine = 2'-O-methylcytidine(2498) in 23S rRNA + S-adenosyl-L-homocysteine + H(+). Catalyzes the 2'-O-methylation at nucleotide C2498 in 23S rRNA. The chain is Ribosomal RNA large subunit methyltransferase M from Xanthomonas axonopodis pv. citri (strain 306).